The primary structure comprises 51 residues: Lantibiotic flavucin (51 aa).

Residues 1–20 (MSDFTLDFAEGDAADTVSPQ) constitute a propeptide that is removed on maturation. Positions 23–27 (SKSLC) form a cross-link, lanthionine (Ser-Cys). 3 consecutive cross-links (beta-methyllanthionine (Thr-Cys)) follow at residues 28 to 31 (TPGC), 33 to 38 (TGWMMC), and 42 to 45 (TKGC).

This sequence belongs to the type A lantibiotic family. In terms of processing, maturation of lantibiotics involves the enzymatic conversion of Thr, and Ser into dehydrated AA and the formation of thioether bonds with cysteine. This is followed by membrane translocation and cleavage of the modified precursor.

Antimicrobial activity depends on the dehydration degree and integrity of flavucin. Functionally, lanthionine-containing peptide antibiotic (lantibiotic) active on certain Gram-positive bacteria. The bactericidal activity of lantibiotics is based on depolarization of energized bacterial cytoplasmic membranes, initiated by the formation of aqueous transmembrane pores. Flavucin has high antimicrobial activity against several pathogenic bacteria such as S.aureus, E.faecalis, E.faecium and L.monocytogenes. Is also active against the Gram-negative P.aeruginosa. This Corynebacterium lipophiloflavum (strain ATCC 700352 / DSM 44291 / CCUG 37336 / JCM 10383 / DMMZ 1944) protein is Lantibiotic flavucin.